Reading from the N-terminus, the 81-residue chain is Delta-actitoxin-Aeq2d (81 aa).

The first 19 residues, 1-19, serve as a signal peptide directing secretion; the sequence is MNRLMILVFAAVILALASA. Positions 20–25 are excised as a propeptide; sequence DDVDIA. Disulfide bonds link Cys-31-Cys-78, Cys-33-Cys-68, and Cys-61-Cys-79.

It belongs to the sea anemone sodium channel inhibitory toxin family. Type I subfamily.

It localises to the secreted. The protein localises to the nematocyst. Binds specifically to voltage-gated sodium channels (Nav), thereby delaying their inactivation during signal transduction. Causes death to crabs. This chain is Delta-actitoxin-Aeq2d, found in Actinia equina (Beadlet anemone).